Consider the following 713-residue polypeptide: Undecaprenyl-diphosphooligosaccharide--protein glycotransferase (713 aa).

The Cytoplasmic portion of the chain corresponds to 1 to 11 (MLKKEYLKNPY). A helical transmembrane segment spans residues 12–35 (LVLFAMIILAYVFSVLCRFYWIWW). Residues 36–96 (ASEFNEYFFN…YWLYKITPFS (61 aa)) lie on the Periplasmic side of the membrane. A DXD motif 1 motif is present at residues 52-54 (SND). Aspartate 54 contributes to the Mn(2+) binding site. Residues 97-122 (FESIILYMSTFLSSLVVIPIILLANE) traverse the membrane as a helical segment. The Cytoplasmic segment spans residues 123–125 (YKR). The helical transmembrane segment at 126–144 (PLMGFVAALLASVANSYYN) threads the bilayer. Residues 145 to 152 (RTMSGYYD) are Periplasmic-facing. Aspartate 152 is a Mn(2+) binding site. Positions 152–154 (DTD) match the DXD motif 2 motif. Residues 153–174 (TDMLVIVLPMFILFFMVRMILK) form a helical membrane-spanning segment. The Cytoplasmic segment spans residues 175–176 (KD). A helical transmembrane segment spans residues 177–192 (FFSLIALPLFIGIYLW). The Periplasmic portion of the chain corresponds to 193 to 197 (WYPSS). Position 194 to 196 (194 to 196 (YPS)) interacts with [alpha-D-GalNAc-(1-&gt;4)]2-[beta-D-Glc-(1-&gt;3)]-[alpha-D-GalNAc-(1-&gt;4)]2-alpha-D-GalNAc-(1-&gt;3)-alpha-D-diNAcBac-tri-trans,hepta-cis-undecaprenyl diphosphate. A helical membrane pass occupies residues 198-215 (YTLNVALIGLFLIYTLIF). Residues 216–220 (HRKEK) lie on the Cytoplasmic side of the membrane. Residues 221–233 (IFYIAVILSSLTL) traverse the membrane as a helical segment. The Periplasmic segment spans residues 234–237 (SNIA). A helical membrane pass occupies residues 238–254 (WFYQSAIIVILFALFAL). Topologically, residues 255-260 (EQKRLN) are cytoplasmic. Residues 261-278 (FMIIGILGSATLIFLILS) form a helical membrane-spanning segment. Residues 279-324 (GGVDPILYQLKFYIFRNDESANLTQGFMYFNVNQTIQEVENVDFSE) are Periplasmic-facing. Tyrosine 291 serves as a coordination point for [alpha-D-GalNAc-(1-&gt;4)]2-[beta-D-Glc-(1-&gt;3)]-[alpha-D-GalNAc-(1-&gt;4)]2-alpha-D-GalNAc-(1-&gt;3)-alpha-D-diNAcBac-tri-trans,hepta-cis-undecaprenyl diphosphate. Residues 313–316 (TIQE) carry the TIXE motif motif. A Mn(2+)-binding site is contributed by glutamate 316. The helical transmembrane segment at 325-347 (FMRRISGSEIVFLFSLFGFVWLL) threads the bilayer. At 348 to 352 (RKHKS) the chain is on the cytoplasmic side. The helical transmembrane segment at 353 to 369 (MIMALPILVLGFLALKG) threads the bilayer. The Periplasmic segment spans residues 370–373 (GLRF). Arginine 372 provides a ligand contact to [alpha-D-GalNAc-(1-&gt;4)]2-[beta-D-Glc-(1-&gt;3)]-[alpha-D-GalNAc-(1-&gt;4)]2-alpha-D-GalNAc-(1-&gt;3)-alpha-D-diNAcBac-tri-trans,hepta-cis-undecaprenyl diphosphate. Residues 374–396 (TIYSVPVMALGFGFLLSEFKAIL) form a helical membrane-spanning segment. The Cytoplasmic portion of the chain corresponds to 397–406 (VKKYSQLTSN). The helical transmembrane segment at 407 to 427 (VCIVFATILTLAPVFIHIYNY) threads the bilayer. Topologically, residues 428-713 (KAPTVFSQNE…RDAKVFKLKI (286 aa)) are periplasmic. An interacts with target acceptor peptide in protein substrate region spans residues 457–459 (WWD). The WWDYG motif signature appears at 457–461 (WWDYG). Tyrosine 462 is a [alpha-D-GalNAc-(1-&gt;4)]2-[beta-D-Glc-(1-&gt;3)]-[alpha-D-GalNAc-(1-&gt;4)]2-alpha-D-GalNAc-(1-&gt;3)-alpha-D-diNAcBac-tri-trans,hepta-cis-undecaprenyl diphosphate binding site. Asparagine 534 carries an N-linked (DATDGlc) asparagine glycan. Positions 568–575 (MSLIFSTV) match the MI motif motif.

It belongs to the STT3 family. Mg(2+) serves as cofactor. The cofactor is Mn(2+).

It localises to the cell inner membrane. It carries out the reaction tritrans,heptacis-undecaprenyl diphosphooligosaccharide + [protein]-L-asparagine = tritrans,heptacis-undecaprenyl diphosphate + a glycoprotein with the oligosaccharide chain attached by N-beta-D-glycosyl linkage to protein L-asparagine.. The protein operates within protein modification; protein glycosylation. Functionally, oligosaccharyltransferase that catalyzes the transfer of a preassembled heptasaccharide from a lipid donor to an asparagine residue in nascent polypeptide chains, affording a beta-linked glycan to the asparagine side chain of target proteins. In terms of biological role, oligosaccharyl transferase (OST) that catalyzes the initial transfer of a defined glycan (GalNAc(2)GlcGalNAc(3)Bac(NAc)(2) in eubacteria, where Bac(NAc)(2) is di-N-acetyl bacillosamine) from the lipid carrier undecaprenol-pyrophosphate to an asparagine residue within an Asp/Glu-Asn-X-Ser/Thr consensus motif in nascent polypeptide chains, the first step in protein N-glycosylation. This Campylobacter jejuni (strain RM1221) protein is Undecaprenyl-diphosphooligosaccharide--protein glycotransferase (pglB).